A 396-amino-acid polypeptide reads, in one-letter code: Putative N(4)-(beta-N-acetylglucosaminyl)-L-asparaginase GE19290 (396 aa).

The first 23 residues, 1–23 (MKRHLKACLWVLCFASTALSSLA), serve as a signal peptide directing secretion. Cystine bridges form between Cys-100–Cys-105 and Cys-199–Cys-215. Thr-246 serves as the catalytic Nucleophile. Substrate is bound by residues 274-277 (RVGD) and 297-300 (TGDG). Cys-357 and Cys-384 are oxidised to a cystine.

Belongs to the Ntn-hydrolase family. As to quaternary structure, heterotetramer of two alpha and two beta chains arranged as a dimer of alpha/beta heterodimers. Cleaved into an alpha and beta chain by autocatalysis; this activates the enzyme. The N-terminal residue of the beta subunit is responsible for the nucleophile hydrolase activity.

It carries out the reaction N(4)-(beta-N-acetyl-D-glucosaminyl)-L-asparagine + H2O = N-acetyl-beta-D-glucosaminylamine + L-aspartate + H(+). Functionally, cleaves the GlcNAc-Asn bond which joins oligosaccharides to the peptide of asparagine-linked glycoproteins. The sequence is that of Putative N(4)-(beta-N-acetylglucosaminyl)-L-asparaginase GE19290 from Drosophila yakuba (Fruit fly).